The chain runs to 97 residues: Putative defensin-like protein 227 (97 aa).

The first 26 residues, 1–26 (MKWATLFMVSCVLMFFVMNNINEVES), serve as a signal peptide directing secretion. Intrachain disulfides connect C35–C97, C45–C76, C53–C91, and C74–C93.

The protein belongs to the DEFL family.

The protein localises to the secreted. The polypeptide is Putative defensin-like protein 227 (SCRL28) (Arabidopsis thaliana (Mouse-ear cress)).